The following is a 111-amino-acid chain: MNAHKERLESNLLELLQEALSSLNDSELNSLSVTKVECSKGKHHAFVFVLSQDHKILSKLKKAEGLIRQFVLQASGWFKCPKLSFILDNSLEKQLRLDAIFNEIAKGKDDD.

This sequence belongs to the RbfA family. As to quaternary structure, monomer. Binds 30S ribosomal subunits, but not 50S ribosomal subunits or 70S ribosomes.

Its subcellular location is the cytoplasm. One of several proteins that assist in the late maturation steps of the functional core of the 30S ribosomal subunit. Associates with free 30S ribosomal subunits (but not with 30S subunits that are part of 70S ribosomes or polysomes). Required for efficient processing of 16S rRNA. May interact with the 5'-terminal helix region of 16S rRNA. This chain is Ribosome-binding factor A, found in Helicobacter acinonychis (strain Sheeba).